Reading from the N-terminus, the 297-residue chain is Lipoyl synthase (297 aa).

[4Fe-4S] cluster contacts are provided by C34, C39, C45, C60, C64, C67, and S273. A Radical SAM core domain is found at 46–262; sequence WNKRHATVMI…KYVAYSKGFL (217 aa).

The protein belongs to the radical SAM superfamily. Lipoyl synthase family. It depends on [4Fe-4S] cluster as a cofactor.

The protein localises to the cytoplasm. The enzyme catalyses [[Fe-S] cluster scaffold protein carrying a second [4Fe-4S](2+) cluster] + N(6)-octanoyl-L-lysyl-[protein] + 2 oxidized [2Fe-2S]-[ferredoxin] + 2 S-adenosyl-L-methionine + 4 H(+) = [[Fe-S] cluster scaffold protein] + N(6)-[(R)-dihydrolipoyl]-L-lysyl-[protein] + 4 Fe(3+) + 2 hydrogen sulfide + 2 5'-deoxyadenosine + 2 L-methionine + 2 reduced [2Fe-2S]-[ferredoxin]. It functions in the pathway protein modification; protein lipoylation via endogenous pathway; protein N(6)-(lipoyl)lysine from octanoyl-[acyl-carrier-protein]: step 2/2. Catalyzes the radical-mediated insertion of two sulfur atoms into the C-6 and C-8 positions of the octanoyl moiety bound to the lipoyl domains of lipoate-dependent enzymes, thereby converting the octanoylated domains into lipoylated derivatives. In Ehrlichia chaffeensis (strain ATCC CRL-10679 / Arkansas), this protein is Lipoyl synthase.